Reading from the N-terminus, the 660-residue chain is UvrABC system protein B (660 aa).

In terms of domain architecture, Helicase ATP-binding spans aspartate 26–lysine 196. Glycine 39–threonine 46 contacts ATP. The Beta-hairpin signature appears at tyrosine 92–asparagine 115. Positions glutamine 431 to isoleucine 593 constitute a Helicase C-terminal domain. In terms of domain architecture, UVR spans lysine 622–glutamate 657.

Belongs to the UvrB family. In terms of assembly, forms a heterotetramer with UvrA during the search for lesions. Interacts with UvrC in an incision complex.

The protein localises to the cytoplasm. In terms of biological role, the UvrABC repair system catalyzes the recognition and processing of DNA lesions. A damage recognition complex composed of 2 UvrA and 2 UvrB subunits scans DNA for abnormalities. Upon binding of the UvrA(2)B(2) complex to a putative damaged site, the DNA wraps around one UvrB monomer. DNA wrap is dependent on ATP binding by UvrB and probably causes local melting of the DNA helix, facilitating insertion of UvrB beta-hairpin between the DNA strands. Then UvrB probes one DNA strand for the presence of a lesion. If a lesion is found the UvrA subunits dissociate and the UvrB-DNA preincision complex is formed. This complex is subsequently bound by UvrC and the second UvrB is released. If no lesion is found, the DNA wraps around the other UvrB subunit that will check the other stand for damage. This is UvrABC system protein B from Metamycoplasma arthritidis (strain 158L3-1) (Mycoplasma arthritidis).